Reading from the N-terminus, the 218-residue chain is MRLILLGAPGAGKGTQAGFIKDKFNIPQISTGDMLRAAVKAGTPLGIAAKKIMDEGGLVSDDIIIGLVKDRLKEADCAKGYLFDGFPRTIPQADAMKEAGVAIDYVLEIDVPDEAIVERMSGRRVHPASGRTYHVKFNPPKVAGKDDLTGEELIQRDDDKEETVKKRLSVYHEQTEVLVGYYNQWAASGQPGAPKYRKIAGVGPVDQIRDSAFAALAG.

Residue 10-15 (GAGKGT) coordinates ATP. Residues 30-59 (STGDMLRAAVKAGTPLGIAAKKIMDEGGLV) are NMP. Residues Thr-31, Arg-36, 57 to 59 (GLV), 85 to 88 (GFPR), and Gln-92 each bind AMP. The interval 122–159 (GRRVHPASGRTYHVKFNPPKVAGKDDLTGEELIQRDDD) is LID. ATP is bound by residues Arg-123 and 132–133 (TY). Positions 156 and 167 each coordinate AMP. Gly-203 is an ATP binding site.

The protein belongs to the adenylate kinase family. As to quaternary structure, monomer.

Its subcellular location is the cytoplasm. The catalysed reaction is AMP + ATP = 2 ADP. The protein operates within purine metabolism; AMP biosynthesis via salvage pathway; AMP from ADP: step 1/1. Functionally, catalyzes the reversible transfer of the terminal phosphate group between ATP and AMP. Plays an important role in cellular energy homeostasis and in adenine nucleotide metabolism. This Janthinobacterium sp. (strain Marseille) (Minibacterium massiliensis) protein is Adenylate kinase.